The chain runs to 124 residues: Mediator of RNA polymerase II transcription subunit 31 (124 aa).

This sequence belongs to the Mediator complex subunit 31 family. As to quaternary structure, component of the Mediator complex.

The protein resides in the nucleus. In terms of biological role, component of the Mediator complex, a coactivator involved in the regulated transcription of nearly all RNA polymerase II-dependent genes. Mediator functions as a bridge to convey information from gene-specific regulatory proteins to the basal RNA polymerase II transcription machinery. Mediator is recruited to promoters by direct interactions with regulatory proteins and serves as a scaffold for the assembly of a functional preinitiation complex with RNA polymerase II and the general transcription factors. The polypeptide is Mediator of RNA polymerase II transcription subunit 31 (SOH1) (Kluyveromyces lactis (strain ATCC 8585 / CBS 2359 / DSM 70799 / NBRC 1267 / NRRL Y-1140 / WM37) (Yeast)).